A 731-amino-acid chain; its full sequence is Nucleolar GTP-binding protein 2 (731 aa).

At Met-1 the chain carries N-acetylmethionine. Residues 1 to 33 form a disordered region; the sequence is MVKPKYKGRSTINPSKASTNPDRVQGAGGQNMR. Residues 10–22 are compositionally biased toward polar residues; the sequence is STINPSKASTNPD. A CP-type G domain is found at 207–368; sequence WGELYKVIDS…LIDCPGVVYP (162 aa). Residues 317–324 and 361–365 each bind GTP; these read GYPNVGKS and DCPGV. The interval 481–502 is disordered; sequence VVPEAAQNNPGEEVTETAGEGS. Ser-504 carries the phosphoserine modification. Residues 555–589 show a composition bias toward acidic residues; the sequence is LEEELESFSDEEEEEQEQQRDDAEESSSEPEEENV. Disordered stretches follow at residues 555–594 and 630–731; these read LEEE…NDTK and EKIF…RQKQ. Composition is skewed to basic and acidic residues over residues 630–652 and 662–671; these read EKIF…DRAP and QREEEQEHSN. 2 stretches are compositionally biased toward basic residues: residues 681–695 and 721–731; these read ERRR…KKVG and KHKRKKFRQKQ.

The protein belongs to the TRAFAC class YlqF/YawG GTPase family. NOG2 subfamily. As to quaternary structure, interacts with LYAR and RPL23A. Interacts with the nuclear importin-beta receptor and, at a lower extent, with importin-alpha. In terms of tissue distribution, widely expressed, with the highest expression level in testis.

It localises to the nucleus. It is found in the nucleolus. In terms of biological role, GTPase that associates with pre-60S ribosomal subunits in the nucleolus and is required for their nuclear export and maturation. May promote cell proliferation possibly by increasing p53/TP53 protein levels, and consequently those of its downstream product CDKN1A/p21, and decreasing RPL23A protein levels. The protein is Nucleolar GTP-binding protein 2 (GNL2) of Homo sapiens (Human).